Reading from the N-terminus, the 248-residue chain is UPF0273 protein APE_1505.1 (248 aa).

Positions Asp3–Ile247 constitute a KaiC domain. Gly30 to Ser37 provides a ligand contact to ATP.

Belongs to the UPF0273 family.

This Aeropyrum pernix (strain ATCC 700893 / DSM 11879 / JCM 9820 / NBRC 100138 / K1) protein is UPF0273 protein APE_1505.1.